Consider the following 57-residue polypeptide: UPF0391 membrane protein Xaut_1725 (57 aa).

A run of 2 helical transmembrane segments spans residues 4 to 24 (WAVTFLVVALIAAVLGFGGIA) and 30 to 50 (IAKIIFFVAIVLFVISAVAGL).

The protein belongs to the UPF0391 family.

The protein localises to the cell membrane. The protein is UPF0391 membrane protein Xaut_1725 of Xanthobacter autotrophicus (strain ATCC BAA-1158 / Py2).